Consider the following 425-residue polypeptide: Interferon-activable protein 211 (425 aa).

The 88-residue stretch at 1–88 folds into the Pyrin domain; it reads MVNEYKRIVL…AEILKKERSE (88 aa). The span at 86 to 99 shows a compositional bias: basic and acidic residues; that stretch reads RSEVTGETSLEKNG. The disordered stretch occupies residues 86-223; the sequence is RSEVTGETSL…QNQNIPRGAV (138 aa). Low complexity predominate over residues 122 to 153; sequence TSATQEETSTAQAGTSTAQAGTSTAQAGTSTA. 4 repeat units span residues 129 to 135, 136 to 142, 143 to 149, and 150 to 156. The 4 X 7 AA tandem repeats of T-S-T-A-Q-A-[GR] stretch occupies residues 129 to 177; that stretch reads TSTAQAGTSTAQAGTSTAQAGTSTAQKRKSMREEETGVKKSKAAKEPDQ. Residues 159 to 176 show a composition bias toward basic and acidic residues; the sequence is MREEETGVKKSKAAKEPD. Over residues 190 to 206 the composition is skewed to low complexity; the sequence is SPILHSSSSASSNILSA. Residues 207–218 show a composition bias toward polar residues; the sequence is KNQKSQPQNQNI. In terms of domain architecture, HIN-200 spans 213-413; it reads PQNQNIPRGA…CGDHSFVKVT (201 aa).

The protein belongs to the HIN-200 family. As to quaternary structure, interacts with HOXB2. Mononuclear phagocytes.

The protein localises to the nucleus. Its function is as follows. Inhibits cell growth via p53/TP53 and RB1-dependent and independent pathways. May work in synergy with TP53 to promote the transcription of CDKN1A/P21. In Mus musculus (Mouse), this protein is Interferon-activable protein 211.